Reading from the N-terminus, the 458-residue chain is Cysteine--tRNA ligase (458 aa).

Cys29 lines the Zn(2+) pocket. The 'HIGH' region motif lies at 31–41 (PTVYDFLHIGN). Cys211, His236, and Glu240 together coordinate Zn(2+). A 'KMSKS' region motif is present at residues 269–273 (KMSKS). Residue Lys272 participates in ATP binding.

Belongs to the class-I aminoacyl-tRNA synthetase family. As to quaternary structure, monomer. Requires Zn(2+) as cofactor.

The protein localises to the cytoplasm. The enzyme catalyses tRNA(Cys) + L-cysteine + ATP = L-cysteinyl-tRNA(Cys) + AMP + diphosphate. The protein is Cysteine--tRNA ligase of Beijerinckia indica subsp. indica (strain ATCC 9039 / DSM 1715 / NCIMB 8712).